A 230-amino-acid chain; its full sequence is Ion-translocating oxidoreductase complex subunit E (230 aa).

A run of 6 helical transmembrane segments spans residues 18–38 (ALVQ…ATNA), 39–59 (LGLG…VSAL), 63–83 (TPAE…VSAV), 86–106 (LINA…PLIV), 125–145 (WLSA…MFVL), and 182–202 (PFLL…MLAV).

Belongs to the NqrDE/RnfAE family. As to quaternary structure, the complex is composed of six subunits: RsxA, RsxB, RsxC, RsxD, RsxE and RsxG.

Its subcellular location is the cell inner membrane. Its function is as follows. Part of a membrane-bound complex that couples electron transfer with translocation of ions across the membrane. Required to maintain the reduced state of SoxR. This chain is Ion-translocating oxidoreductase complex subunit E, found in Salmonella arizonae (strain ATCC BAA-731 / CDC346-86 / RSK2980).